The chain runs to 155 residues: Isotocin-neurophysin IT 1 (155 aa).

A signal peptide spans 1-19 (MTGTAISVCLLFLLSVCSA). Cysteine 20 and cysteine 25 are disulfide-bonded. Position 28 is a glycine amide (glycine 28). 7 disulfides stabilise this stretch: cysteine 41-cysteine 85, cysteine 44-cysteine 58, cysteine 52-cysteine 75, cysteine 59-cysteine 65, cysteine 92-cysteine 105, cysteine 99-cysteine 117, and cysteine 106-cysteine 111.

The protein belongs to the vasopressin/oxytocin family. Post-translationally, seven disulfide bonds are present in neurophysin.

Its function is as follows. Isotocin causes contraction of smooth muscles. This chain is Isotocin-neurophysin IT 1, found in Takifugu rubripes (Japanese pufferfish).